A 298-amino-acid chain; its full sequence is MNYWESKSICTVFTKYNDTEIINKIDPVKSNIDHSLYKQYTIGYMSNFNIVNICKFVNKHSNYIFDIDTFSWLVLNPFSDPSFNIVLYDNDKIVATIVGILRSIKIKNEIHKIIHTTFLTVDENYRKQGIHFYIIDKLMENAFNKGVLLGIFSTMKKIKKIKCVNVQDTYIIKSDSKKYKENNNVFDYKKLNQKNDDLYFIYNDMEIEYWFNKKYCHIISIYNNLFCFLKIKYKNNENLNILIEQYIHNKNINKYSIPNNSIMFSQYIQLPQIKLQNQIYTYIYNLNFNNLKCNICMF.

The protein belongs to the NMT family.

The catalysed reaction is N-terminal glycyl-[protein] + tetradecanoyl-CoA = N-tetradecanoylglycyl-[protein] + CoA + H(+). Its function is as follows. Adds a myristoyl group to the N-terminal glycine residue of certain proteins. In Melanoplus sanguinipes (Migratory grasshopper), this protein is Putative glycylpeptide N-tetradecanoyltransferase.